The primary structure comprises 296 residues: Protease HtpX homolog (296 aa).

Helical transmembrane passes span 14–34 (VFLL…VGYL) and 38–58 (SLVT…VIMI). Position 144 (His144) interacts with Zn(2+). Residue Glu145 is part of the active site. His148 is a binding site for Zn(2+). The next 2 helical transmembrane spans lie at 159 to 179 (IALA…NWWL) and 198 to 218 (LLVF…AAVI). Glu227 is a Zn(2+) binding site.

It belongs to the peptidase M48B family. Requires Zn(2+) as cofactor.

The protein resides in the cell membrane. The polypeptide is Protease HtpX homolog (Leuconostoc citreum (strain KM20)).